The chain runs to 192 residues: Pyridoxal 5'-phosphate synthase subunit PdxT (192 aa).

46-48 provides a ligand contact to L-glutamine; sequence GES. The active-site Nucleophile is the cysteine 75. L-glutamine is bound by residues arginine 101 and 129–130; that span reads IR. Residues histidine 166 and glutamate 168 each act as charge relay system in the active site.

Belongs to the glutaminase PdxT/SNO family. In the presence of PdxS, forms a dodecamer of heterodimers. Only shows activity in the heterodimer.

The catalysed reaction is aldehydo-D-ribose 5-phosphate + D-glyceraldehyde 3-phosphate + L-glutamine = pyridoxal 5'-phosphate + L-glutamate + phosphate + 3 H2O + H(+). It carries out the reaction L-glutamine + H2O = L-glutamate + NH4(+). Its pathway is cofactor biosynthesis; pyridoxal 5'-phosphate biosynthesis. Its function is as follows. Catalyzes the hydrolysis of glutamine to glutamate and ammonia as part of the biosynthesis of pyridoxal 5'-phosphate. The resulting ammonia molecule is channeled to the active site of PdxS. The polypeptide is Pyridoxal 5'-phosphate synthase subunit PdxT (Staphylococcus carnosus (strain TM300)).